Here is a 335-residue protein sequence, read N- to C-terminus: Leukocyte cell-derived chemotaxin-2 homolog (335 aa).

The N-terminal stretch at 1–20 (MHLRTLHFLILIGIFIGGQT) is a signal peptide. 2 disulfide bridges follow: Cys-28/Cys-66 and Cys-39/Cys-46. Asp-63 contacts Zn(2+). Asn-317 carries an N-linked (GlcNAc...) asparagine glycan.

The protein belongs to the LECT2/MIM-1 family. As to quaternary structure, component of a multi-protein dma-1 receptor-ligand complex, which is activated upon binding of lect-2, mnr-1 and sax-7 ligands to promote the morphogenesis of dendrites which extend from the PVD neuronal body. Within the complex interacts with sax-7; the interaction is required for lect-2 dendritic localization and enhances the binding of the mnr-1 and sax-7 ligands to the dma-1 receptor-ligand complex. As to expression, expressed in body wall muscle cells, along the boundary of the lateral hypodermis, seam cells, processes of the nervous system including commissures, sensory dendrites in the head, and lateral nerve tracts, and motor neurons and some mechanosensory neurons such as ALM.

Its subcellular location is the secreted. It is found in the cell junction. It localises to the extracellular space. The protein resides in the extracellular matrix. The protein localises to the basement membrane. Its subcellular location is the cell projection. It is found in the dendrite. It localises to the perikaryon. The protein resides in the cell surface. In terms of biological role, muscle-derived dendritic guidance cue, which is required for the formation of somatosensory dendritic arbors which extend from PVD and FLP sensory neurons during development. Ligand of a multi-protein dma-1 receptor-ligand complex, which is activated upon binding of lect-2, mnr-1 and sax-7 ligands to control the growth of dendrites that extend anteriorly from the PVD neuronal cell body. Enhances the binding of the mnr-1 and sax-7 ligands to the dma-1 receptor-ligand complex. Restricts the growth of secondary PVD dendritic branches and any irregularly positioned ectopic tertiary dendritic branches that originate from secondary branches, and promotes the formation of stable higher order dendritic branches. In particular, it is required for the formation of quaternary PVD dendritic branches and promotes their innervation of body wall muscles. Promotes self-avoidance of tertiary dendritic branches of PVD sensory neurons. Not required for the growth of dendrites that extend from AIY and PVQ interneurons, DVB GABergic neurons, PLM and ALM mechanosensory neurons, AFD sensory neurons and DD/VD and DA/DB motor neurons. This chain is Leukocyte cell-derived chemotaxin-2 homolog, found in Caenorhabditis elegans.